A 321-amino-acid chain; its full sequence is tRNA dimethylallyltransferase (321 aa).

Residue 25 to 32 (GPTASGKS) coordinates ATP. 27 to 32 (TASGKS) is a binding site for substrate. The interval 50–53 (DSMQ) is interaction with substrate tRNA.

It belongs to the IPP transferase family. In terms of assembly, monomer. Mg(2+) serves as cofactor.

The catalysed reaction is adenosine(37) in tRNA + dimethylallyl diphosphate = N(6)-dimethylallyladenosine(37) in tRNA + diphosphate. In terms of biological role, catalyzes the transfer of a dimethylallyl group onto the adenine at position 37 in tRNAs that read codons beginning with uridine, leading to the formation of N6-(dimethylallyl)adenosine (i(6)A). The polypeptide is tRNA dimethylallyltransferase (Rhodopseudomonas palustris (strain ATCC BAA-98 / CGA009)).